The sequence spans 536 residues: MAEADPKMVTEPAAQGVAEEAMASSACDSGDESDSNSSSSTTSCGSTGSSSSSSSSSSSSSSSSSGSSGSSSNGSHLHQKKRVPGPSRRAQRRPSGKLFMDKLPQAVRNRVQALRNIQNECDKVDTLFLRAIHDLERKYAELNKPLYDKRFQIINAEYEPTEEECEWNSEEEFSGDEEMQDDTPNEMPPLEGEEEEEIGKENTEVKEEVKDVPEEVPEAKVEEEEAPKETSEVKTEEKEIPKEGPEEKAEEQESSKEFPEVKVEEKTDSTDCIDIAPEEKEDLKDVTQANAEYTDQPTEDSTPRAPVREAQKRVPETRPEERVNIKRARKGKPKKEDPPRGIPDYWLTVLKNVDKLGPMIQKCDEPILKFLSDVSLKFSNPGQPISYTFEFHFLPNPYFRNELLMKTYIIRSKPDHYDPFFAWGWEIEECKGCKIDWRRGKDVTVTTRSRPAITGEIEVQPRVVPNASFFNFFSPPEIPLIGKLEPKEDAILDEDFEIGQILHDNVILKSIYYFTGEINDPYYHDFRDYGNRKYYK.

Disordered regions lie at residues 1 to 104 (MAEA…DKLP) and 160 to 338 (PTEE…KEDP). Residues 35-75 (SNSSSSTTSCGSTGSSSSSSSSSSSSSSSSSGSSGSSSNGS) are compositionally biased toward low complexity. Residues 77-95 (LHQKKRVPGPSRRAQRRPS) are compositionally biased toward basic residues. Residues 160–184 (PTEEECEWNSEEEFSGDEEMQDDTP) show a composition bias toward acidic residues. Composition is skewed to basic and acidic residues over residues 199 to 220 (GKENTEVKEEVKDVPEEVPEAK) and 227 to 269 (PKET…KTDS). Polar residues predominate over residues 287-300 (TQANAEYTDQPTED). Basic and acidic residues predominate over residues 306–324 (PVREAQKRVPETRPEERVN).

The protein belongs to the nucleosome assembly protein (NAP) family.

Its subcellular location is the nucleus. This is Nucleosome assembly protein 1-like 3 (Nap1l3) from Rattus norvegicus (Rat).